The chain runs to 95 residues: Citrate lyase acyl carrier protein (95 aa).

Ser14 carries the post-translational modification O-(phosphoribosyl dephospho-coenzyme A)serine.

The protein belongs to the CitD family. As to quaternary structure, oligomer with a subunit composition of (alpha,beta,gamma)6.

The protein localises to the cytoplasm. In terms of biological role, covalent carrier of the coenzyme of citrate lyase. This chain is Citrate lyase acyl carrier protein, found in Haemophilus influenzae (strain ATCC 51907 / DSM 11121 / KW20 / Rd).